Reading from the N-terminus, the 488-residue chain is RNA binding exosome specificity factor Mmi1 (488 aa).

3 stretches are compositionally biased toward polar residues: residues 1 to 14 (MSNTNFSTSRSSKS), 33 to 47 (LNESGDTRSVWTTHT), and 54 to 66 (SVLSTSGSNNFSS). Disordered regions lie at residues 1-20 (MSNTNFSTSRSSKSIPELPN) and 25-80 (RSLW…DAPI). Positions 71–80 (PAPESHDAPI) are enriched in basic and acidic residues. The tract at residues 95–122 (GKYDFSRHCTDYGHSYEWPYFRSLRRES) is interaction with erh1. 2 disordered regions span residues 163–185 (SRLHGIQPPPKRRTLSPPPRRLA) and 225–261 (SYPVRSSPQLSHEDTRHGIASSGSTRYPFVPANTRAS). Thr176 is subject to Phosphothreonine. Phosphoserine is present on residues Ser178, Ser230, Ser231, Ser261, Ser263, and Ser265. Low complexity predominate over residues 289-299 (SYLLSNSSNDS). The segment at 289–328 (SYLLSNSSNDSASRKEKPKARASTPPPLNFSRASEHRNEK) is disordered. Residue Ser311 is modified to Phosphoserine. Thr312 carries the post-translational modification Phosphothreonine. A YTH domain is found at 350–476 (SRYFIMLCDN…DEGSRLCTLI (127 aa)).

As to quaternary structure, component of the erh1-mmi1 complex composed of mmi1 and erh1. Interacts (via N-terminus) with erh1 in a 2:2 stoichiometry. Interacts with rrp6.

The protein resides in the nucleus. In terms of biological role, RNA-binding protein that recognizes and binds N6-methyladenosine (m6A)-containing RNAs, a modification present at internal sites of mRNAs and some non-coding RNAs. Functions alone and as part of the erh1-mmi1 complex, to recruit the CCR4-NOT complex and the NURS complex to target RNAs. Suppresses the meiotic program during vegetative growth and promotes the meiotic program during mating. Binds to DSR (determinant of selective removal) regions in meiotic mRNA, and recruits the NURS complex to targets. Recruitment of NURS complex to target mRNAs promotes mRNA decay by engagement of the nuclear exosome, and formation of heterochromatin islands at meiotic genes silenced by the exosome. Recruitment of the CCR4-NOT complex to target RNAs promotes heterochromatin formation at RNAi-dependent heterochromatin domains (HOODs), including a subset of meiotic genes, lncRNAs and retrotransposons. Recruitment of the CCR4-NOT complex to rDNA promotes rDNA heterochromatin assembly. Promotes non-canonical transcription termination at meiotic genes and prevents lncRNA transcription from invading and repressing adjacent genes. This Schizosaccharomyces pombe (strain 972 / ATCC 24843) (Fission yeast) protein is RNA binding exosome specificity factor Mmi1 (mmi1).